We begin with the raw amino-acid sequence, 513 residues long: ATP synthase subunit alpha (513 aa).

169–176 (GDRQTGKT) serves as a coordination point for ATP.

This sequence belongs to the ATPase alpha/beta chains family. As to quaternary structure, F-type ATPases have 2 components, CF(1) - the catalytic core - and CF(0) - the membrane proton channel. CF(1) has five subunits: alpha(3), beta(3), gamma(1), delta(1), epsilon(1). CF(0) has three main subunits: a(1), b(2) and c(9-12). The alpha and beta chains form an alternating ring which encloses part of the gamma chain. CF(1) is attached to CF(0) by a central stalk formed by the gamma and epsilon chains, while a peripheral stalk is formed by the delta and b chains.

The protein localises to the cell inner membrane. The enzyme catalyses ATP + H2O + 4 H(+)(in) = ADP + phosphate + 5 H(+)(out). Its function is as follows. Produces ATP from ADP in the presence of a proton gradient across the membrane. The alpha chain is a regulatory subunit. This chain is ATP synthase subunit alpha, found in Salmonella arizonae (strain ATCC BAA-731 / CDC346-86 / RSK2980).